We begin with the raw amino-acid sequence, 399 residues long: Beta-1,6-galactosyltransferase GALT31A (399 aa).

Over 1-12 (MGMGRYQKSATS) the chain is Cytoplasmic. The chain crosses the membrane as a helical; Signal-anchor for type II membrane protein span at residues 13-35 (GVSARWVFVLCISSFLLGVLVVN). Over 36-399 (RLLASFETVD…GDGAIWHSSF (364 aa)) the chain is Lumenal.

It belongs to the glycosyltransferase 31 family. Interacts with GALT29A. Requires Mn(2+) as cofactor.

Its subcellular location is the golgi apparatus membrane. It functions in the pathway protein modification; protein glycosylation. Its function is as follows. Beta-galactosyltransferase involved in elongation of beta-1,6-linked galactan side chains on arabinogalactan proteins. Required for the progression of embryogenesis beyond the globular stage. Beta-galactosyltransferase involved in the biosynthesis of type II arabinogalactan. Transfers galactose from UDP-galactose to a mixture of various oligosaccharides derived from arabinogalactan proteins. Forms a complex with GALT29A that can work cooperatively to enhance the activities of adding galactose residues at O6 positions to beta-1,6-linked galactan and beta-1,3-linked galactan. The polypeptide is Beta-1,6-galactosyltransferase GALT31A (Arabidopsis thaliana (Mouse-ear cress)).